The chain runs to 451 residues: Probable glycine dehydrogenase (decarboxylating) subunit 1 (451 aa).

It belongs to the GcvP family. N-terminal subunit subfamily. The glycine cleavage system is composed of four proteins: P, T, L and H. In this organism, the P 'protein' is a heterodimer of two subunits.

The catalysed reaction is N(6)-[(R)-lipoyl]-L-lysyl-[glycine-cleavage complex H protein] + glycine + H(+) = N(6)-[(R)-S(8)-aminomethyldihydrolipoyl]-L-lysyl-[glycine-cleavage complex H protein] + CO2. Functionally, the glycine cleavage system catalyzes the degradation of glycine. The P protein binds the alpha-amino group of glycine through its pyridoxal phosphate cofactor; CO(2) is released and the remaining methylamine moiety is then transferred to the lipoamide cofactor of the H protein. The polypeptide is Probable glycine dehydrogenase (decarboxylating) subunit 1 (Thermococcus kodakarensis (strain ATCC BAA-918 / JCM 12380 / KOD1) (Pyrococcus kodakaraensis (strain KOD1))).